Reading from the N-terminus, the 120-residue chain is Ig heavy chain V region 36-65 (120 aa).

The Ig-like domain maps to 1 to 111; the sequence is VQLQQSGAEL…GGSYYFDYWG (111 aa).

The polypeptide is Ig heavy chain V region 36-65 (Mus musculus (Mouse)).